The following is a 444-amino-acid chain: Structure-specific endonuclease subunit SLX1 (444 aa).

The GIY-YIG domain occupies 23–105 (AFSCCYLLRS…QNTKVSRHAD (83 aa)). The SLX1-type zinc finger occupies 240–295 (CGVCKQRLILQHDIIAVCSHSSCHCAAHLSCLSSHFLKDKDSDSELVPREGTCPTC). A disordered region spans residues 324–354 (RRQRAGTPKGQGLKSVRGRGHSEDENESDAL).

It belongs to the SLX1 family. As to quaternary structure, forms a heterodimer with SLX4. It depends on a divalent metal cation as a cofactor.

Its subcellular location is the nucleus. Its function is as follows. Catalytic subunit of the SLX1-SLX4 structure-specific endonuclease that resolves DNA secondary structures generated during DNA repair and recombination. Has endonuclease activity towards branched DNA substrates, introducing single-strand cuts in duplex DNA close to junctions with ss-DNA. This Paracoccidioides lutzii (strain ATCC MYA-826 / Pb01) (Paracoccidioides brasiliensis) protein is Structure-specific endonuclease subunit SLX1.